Reading from the N-terminus, the 95-residue chain is Cell division topological specificity factor (95 aa).

It belongs to the MinE family.

Its function is as follows. Prevents the cell division inhibition by proteins MinC and MinD at internal division sites while permitting inhibition at polar sites. This ensures cell division at the proper site by restricting the formation of a division septum at the midpoint of the long axis of the cell. In Methylorubrum extorquens (strain CM4 / NCIMB 13688) (Methylobacterium extorquens), this protein is Cell division topological specificity factor.